We begin with the raw amino-acid sequence, 447 residues long: Protein king tubby (447 aa).

The disordered stretch occupies residues 54–84; it reads GSPQNPDQILSNNSSSITMNSSRNNSNNMRS. Over residues 62–84 the composition is skewed to low complexity; that stretch reads ILSNNSSSITMNSSRNNSNNMRS. Residue S136 is modified to Phosphoserine. Positions 168-182 are enriched in low complexity; the sequence is EGAAMEGSNGAANGS. Positions 168–191 are disordered; that stretch reads EGAAMEGSNGAANGSGSVGGSGES.

Belongs to the TUB family.

It is found in the cytoplasm. Its subcellular location is the nucleus. The protein localises to the cell projection. The protein resides in the cilium membrane. It localises to the rhabdomere. The sequence is that of Protein king tubby from Drosophila grimshawi (Hawaiian fruit fly).